A 367-amino-acid polypeptide reads, in one-letter code: Cytochrome b (367 aa).

4 helical membrane passes run 20–40 (MGSI…LLSM), 64–85 (WFLR…YAHI), 101–121 (WMVG…GYVL), and 166–186 (FFSL…LHII). Heme b is bound by residues H70 and H84. Heme b is bound by residues H170 and H184. Position 189 (H189) interacts with a ubiquinone. 4 consecutive transmembrane segments (helical) span residues 214–234 (IKDS…TFFS), 276–296 (LGGV…PLSS), 308–328 (IYQV…WLGA), and 335–355 (YLSL…LLGM).

Belongs to the cytochrome b family. As to quaternary structure, the main subunits of complex b-c1 are: cytochrome b, cytochrome c1 and the Rieske protein. Heme b serves as cofactor.

It localises to the mitochondrion inner membrane. Functionally, component of the ubiquinol-cytochrome c reductase complex (complex III or cytochrome b-c1 complex) that is part of the mitochondrial respiratory chain. The b-c1 complex mediates electron transfer from ubiquinol to cytochrome c. Contributes to the generation of a proton gradient across the mitochondrial membrane that is then used for ATP synthesis. The sequence is that of Cytochrome b (MT-CYB) from Albinaria caerulea (Land snail).